Reading from the N-terminus, the 342-residue chain is MTTTPNQGTSHAPIFDLVTDVFGTGRHKPNRTGVDTISGFSKHYTVDLQEGFPLLTTKDLSGFRWNSLIHELLWYFSGEEHIRTLREETGIWDAWADEEGHLDTAYGRFWRRYPVPEEGLAGEAWPDDGHRWMNDEGTFDQLAYVLDTLDENPNSRRLVINAWHPANAAVSTLPPCHYTFVFNVQGDELNLHLTQRSGDIALGVPFNLAAYAILAQVVAQRAGFELGSFAHTIVDAHVYCGAGERGAWYGDHLDELQSRLADVQSPDEYLDVREWLLDAAPEEADGEEDYDHVPGLLLQASREPRERPALDVADVPLEDLSFEDIVLRDYDPADGIRFAVAE.

DUMP-binding positions include arginine 31 and 156–157; that span reads RR. Cysteine 176 acts as the Nucleophile in catalysis. Residues 196 to 199, asparagine 207, and 237 to 239 each bind dUMP; these read RSGD and HVY. Aspartate 199 lines the (6R)-5,10-methylene-5,6,7,8-tetrahydrofolate pocket. A (6R)-5,10-methylene-5,6,7,8-tetrahydrofolate-binding site is contributed by alanine 341.

It belongs to the thymidylate synthase family. Bacterial-type ThyA subfamily. Homodimer.

Its subcellular location is the cytoplasm. The catalysed reaction is dUMP + (6R)-5,10-methylene-5,6,7,8-tetrahydrofolate = 7,8-dihydrofolate + dTMP. Its pathway is pyrimidine metabolism; dTTP biosynthesis. Functionally, catalyzes the reductive methylation of 2'-deoxyuridine-5'-monophosphate (dUMP) to 2'-deoxythymidine-5'-monophosphate (dTMP) while utilizing 5,10-methylenetetrahydrofolate (mTHF) as the methyl donor and reductant in the reaction, yielding dihydrofolate (DHF) as a by-product. This enzymatic reaction provides an intracellular de novo source of dTMP, an essential precursor for DNA biosynthesis. The sequence is that of Thymidylate synthase from Haloferax volcanii (Halobacterium volcanii).